Reading from the N-terminus, the 190-residue chain is Translation initiation factor IF-3 (190 aa).

The protein belongs to the IF-3 family. In terms of assembly, monomer.

It is found in the cytoplasm. Functionally, IF-3 binds to the 30S ribosomal subunit and shifts the equilibrium between 70S ribosomes and their 50S and 30S subunits in favor of the free subunits, thus enhancing the availability of 30S subunits on which protein synthesis initiation begins. This Prochlorococcus marinus (strain AS9601) protein is Translation initiation factor IF-3.